Consider the following 116-residue polypeptide: Large ribosomal subunit protein bL19 (116 aa).

The protein belongs to the bacterial ribosomal protein bL19 family.

Its function is as follows. This protein is located at the 30S-50S ribosomal subunit interface and may play a role in the structure and function of the aminoacyl-tRNA binding site. The protein is Large ribosomal subunit protein bL19 of Pseudothermotoga lettingae (strain ATCC BAA-301 / DSM 14385 / NBRC 107922 / TMO) (Thermotoga lettingae).